The following is a 241-amino-acid chain: RAD9, HUS1, RAD1-interacting nuclear orphan protein 1 (241 aa).

A compositionally biased stretch (basic residues) spans 1 to 10 (MPPRKKRRQA). The disordered stretch occupies residues 1 to 27 (MPPRKKRRQAAQKPQLLFHQQPLEAPK). Positions 56-62 (SWVSPQF) match the RAD1-binding motif motif. Disordered stretches follow at residues 68-134 (SWFP…PLVP) and 157-204 (IPPD…LVTD). Basic residues predominate over residues 72-87 (GKRKHHHRDHARRSSR). Polar residues predominate over residues 100-110 (ETPQSSASSAT). A D-box motif is present at residues 129-136 (GRPLVPML). The KEN box motif lies at 177–181 (LRENS). The span at 181–193 (SLPSCSLHTSTPK) shows a compositional bias: polar residues.

As to quaternary structure, interacts (when phosphorylated by PLK1) with POLQ; promoting POLQ recruitment to DNA damage sites. Interacts with RAD1; interaction is direct and promotes association with the 9-1-1 (RAD9-RAD1-HUS1) complex. Interacts with RAD18. Interacts with TOPBP1. Interacts with UBE2N. In terms of processing, phosphorylated by PLK1, promoting interaction with polymerase theta (POLQ). Ubiquitinated and degraded by the APC/C complex upon mitotic exit.

It localises to the nucleus. It is found in the chromosome. Functionally, involved in microhomology-mediated end-joining (MMEJ) DNA repair by promoting recruitment of polymerase theta (POLQ) to DNA damage sites during mitosis. MMEJ is an alternative non-homologous end-joining (NHEJ) machinery that takes place during mitosis to repair double-strand breaks in DNA that originate in S-phase. Accumulates in M-phase; following phosphorylation by PLK1, interacts with POLQ, enabling its recruitment to double-strand breaks for subsequent repair. Also involved in the DNA damage response (DDR) signaling in response to genotoxic stresses such as ionizing radiation (IR) during the S phase. Recruited to sites of DNA damage through interaction with the 9-1-1 cell-cycle checkpoint response complex and TOPBP1 in a ATR-dependent manner. Required for the progression of the G1 to S phase transition. Plays a role in the stimulation of CHEK1 phosphorylation. This chain is RAD9, HUS1, RAD1-interacting nuclear orphan protein 1 (RHNO1), found in Bos taurus (Bovine).